Consider the following 349-residue polypeptide: Meiotic recombination protein DMC1 homolog (349 aa).

138-145 (GEFRSGKT) serves as a coordination point for ATP. DsDNA is bound at residue Arg-240. Residues Arg-240, Phe-243, Arg-246, Arg-252, and Arg-320 each coordinate ssDNA. Residues Arg-246 and Arg-252 each contribute to the dsDNA site.

Belongs to the RecA family. DMC1 subfamily. As to quaternary structure, double stacked ring-shaped homooctamer.

The protein localises to the nucleus. In terms of biological role, may participate in meiotic recombination. This Lilium longiflorum (Trumpet lily) protein is Meiotic recombination protein DMC1 homolog (LIM15).